The following is an 819-amino-acid chain: MKRKAEKAQAAAPVSAFAARKARQQQAQATAAAVKPPVAEPVVEPPPKRARRSLEEPVVPVAPEENRVQTRRSSRRKEEQAKVEKPTPKARNDQPPKASKKLPEHDTSKATEDQAPSDEESEEPDVVVGNTGVIGLEPIQNEEEGYESPADTAVQVQDFPLSKARLNKNSIVYSDEHRMCVRIKEKMSLVMIGHYDLWVKRGVVSLMGAKLHPSSQVYRVYAPSTHSLPVIKCVSGVNGEAEVEFKSCHSGIYRLKELSPLYQRIWNGKNTTADKLTLKGTPQSTKRTFSVLYTSADDSFKRHLRPLHLEKQWSSAIKSLSQRGGRLKTLICGPKGSGKSTFSRYLLNHLLSPAPQTETKYFNTDGVAFLDLDPGQPEFAPMGQVYLAHLRSPVFGPPFSHPSLDGSRNGTIVRSHHIGATSPKEDPDHYVLAAMDLMDRYRALQASYPQCPLIINYPGWIFGLGLEVATWLVRSLGLSDVVYMSEKGPTEVVQPLGQAAYQAKIPLTILPSQPTDFVSRSSAQLRSMQMQSYFHMSRPNGINNSLWLEQPLSRTKPFRVHYSGPQQGIQGIMVMGTEIHPDLLHEVLDGSIVAVVAVESPNAILGQNSGPMFANNANAETDGDHDVDMQDSADAVPVIGTSTIESSITRTPNEDLPYLFVGAGSSNPLDPKVSHCLGLALVRSVNVASRQLELVTPITGSTLRGVLEQGHSIVLVRGLLDNPNWAISEDYYAARAAEKRHRELIEKLKKDKGAAAAEDATLESEKQVLKDRIRRASKVPWMTVVEDNSRRQREAAQREKSLWKLRKKAYPGSDSEGDW.

A disordered region spans residues 1 to 129 (MKRKAEKAQA…ESEEPDVVVG (129 aa)). Positions 8 to 42 (AQAAAPVSAFAARKARQQQAQATAAAVKPPVAEPV) are enriched in low complexity. Composition is skewed to basic and acidic residues over residues 76–94 (RKEE…RNDQ) and 101–112 (KLPEHDTSKATE). Acidic residues predominate over residues 115 to 125 (APSDEESEEPD). An ATP-binding site is contributed by 333 to 340 (GPKGSGKS).

This sequence belongs to the Clp1 family. NOL9/GRC3 subfamily.

It localises to the nucleus. The protein resides in the nucleolus. Functionally, polynucleotide 5'-kinase involved in rRNA processing. This Aspergillus niger (strain ATCC MYA-4892 / CBS 513.88 / FGSC A1513) protein is Polynucleotide 5'-hydroxyl-kinase grc3 (grc3).